Reading from the N-terminus, the 158-residue chain is Cell number regulator 11 (158 aa).

2 helical membrane-spanning segments follow: residues 49–67 (FGDL…VTFG) and 78–94 (TCCM…TIGW).

Belongs to the cornifelin family.

It localises to the membrane. The sequence is that of Cell number regulator 11 (CNR11) from Zea mays (Maize).